Here is a 329-residue protein sequence, read N- to C-terminus: R-linalool synthase (329 aa).

D79 lines the Mg(2+) pocket. The DDXXD motif motif lies at 79-83 (DDQFD). Residue R172 coordinates substrate. Mg(2+) is bound by residues N218 and S222. Positions 218–226 (NELHSFEKD) match the NXXXSXXXD motif motif. K225 provides a ligand contact to substrate. D226 lines the Mg(2+) pocket. A substrate-binding site is contributed by 308–309 (RY).

It belongs to the terpene synthase family. In terms of assembly, homodimer. It depends on Mg(2+) as a cofactor.

The catalysed reaction is (2E)-geranyl diphosphate + H2O = (R)-linalool + diphosphate. It catalyses the reaction (2E,6E)-farnesyl diphosphate + H2O = (6E)-nerolidol + diphosphate. Functionally, in vitro, catalyzes the formation of R-linalool from geranyl diphosphate (GPP). Can also accept farnesyl diphosphate (FPP) as substrate to produce trans-nerolidol. The protein is R-linalool synthase of Streptomyces clavuligerus.